Reading from the N-terminus, the 245-residue chain is 1-(5-phosphoribosyl)-5-[(5-phosphoribosylamino)methylideneamino] imidazole-4-carboxamide isomerase (245 aa).

Residue aspartate 7 is the Proton acceptor of the active site. Residue aspartate 129 is the Proton donor of the active site.

It belongs to the HisA/HisF family.

The protein localises to the cytoplasm. The catalysed reaction is 1-(5-phospho-beta-D-ribosyl)-5-[(5-phospho-beta-D-ribosylamino)methylideneamino]imidazole-4-carboxamide = 5-[(5-phospho-1-deoxy-D-ribulos-1-ylimino)methylamino]-1-(5-phospho-beta-D-ribosyl)imidazole-4-carboxamide. Its pathway is amino-acid biosynthesis; L-histidine biosynthesis; L-histidine from 5-phospho-alpha-D-ribose 1-diphosphate: step 4/9. In Shewanella putrefaciens (strain CN-32 / ATCC BAA-453), this protein is 1-(5-phosphoribosyl)-5-[(5-phosphoribosylamino)methylideneamino] imidazole-4-carboxamide isomerase.